We begin with the raw amino-acid sequence, 649 residues long: Extracellular metalloproteinase 4 (649 aa).

The N-terminal stretch at 1 to 18 (MHGLLLAGLLALPSNVLG) is a signal peptide. A propeptide spanning residues 19–260 (HPAEPPNSVN…VHGVVDYVAS (242 aa)) is cleaved from the precursor. His443 lines the Zn(2+) pocket. Glu444 is an active-site residue. His447 provides a ligand contact to Zn(2+). Asn494 and Asn609 each carry an N-linked (GlcNAc...) asparagine glycan.

This sequence belongs to the peptidase M36 family. Requires Zn(2+) as cofactor.

The protein localises to the secreted. Secreted metalloproteinase probably acting as a virulence factor. The polypeptide is Extracellular metalloproteinase 4 (MEP4) (Arthroderma otae (strain ATCC MYA-4605 / CBS 113480) (Microsporum canis)).